Reading from the N-terminus, the 451-residue chain is Neuraminidase (451 aa).

Topologically, residues 1–6 are intravirion; the sequence is MNPNQK. Residues 7-29 traverse the membrane as a helical segment; the sequence is IITIGSMSLTIATVCFLMQIAIL. The involved in apical transport and lipid raft association stretch occupies residues 11–33; that stretch reads GSMSLTIATVCFLMQIAILATNV. Residues 30 to 451 lie on the Virion surface side of the membrane; it reads ATNVTLHFRQ…DGANINFMPL (422 aa). Residues N32, N48, and N66 are each glycosylated (N-linked (GlcNAc...) asparagine; by host). Residues 36–68 form a hypervariable stalk region region; the sequence is HFRQNEESIPAYNQTTPCKPIIIERNIKYRNWS. The tract at residues 71-451 is head of neuraminidase; that stretch reads QCQITGFAPF…DGANINFMPL (381 aa). Intrachain disulfides connect C72–C399, C104–C109, C163–C210, C212–C217, C258–C272, C260–C270, C300–C319, and C403–C429. Substrate is bound at residue R98. 2 N-linked (GlcNAc...) asparagine; by host glycosylation sites follow: N123 and N126. D131 functions as the Proton donor/acceptor in the catalytic mechanism. R132 contacts substrate. 2 N-linked (GlcNAc...) asparagine; by host glycosylation sites follow: N180 and N214. 256–257 lines the substrate pocket; that stretch reads EE. Residue R273 participates in substrate binding. The Ca(2+) site is built by D274, G278, and D306. Residues 307–331 are disordered; it reads TPRNDDSSSSSNCRDPNNERGNPGV. R353 provides a ligand contact to substrate. N-linked (GlcNAc...) asparagine; by host glycosylation is present at N384. Catalysis depends on Y388, which acts as the Nucleophile.

It belongs to the glycosyl hydrolase 34 family. Homotetramer. It depends on Ca(2+) as a cofactor. In terms of processing, N-glycosylated.

The protein resides in the virion membrane. It is found in the host apical cell membrane. It catalyses the reaction Hydrolysis of alpha-(2-&gt;3)-, alpha-(2-&gt;6)-, alpha-(2-&gt;8)- glycosidic linkages of terminal sialic acid residues in oligosaccharides, glycoproteins, glycolipids, colominic acid and synthetic substrates.. With respect to regulation, inhibited by the neuraminidase inhibitors zanamivir (Relenza) and oseltamivir (Tamiflu). These drugs interfere with the release of progeny virus from infected cells and are effective against all influenza strains. Resistance to neuraminidase inhibitors is quite rare. Its function is as follows. Catalyzes the removal of terminal sialic acid residues from viral and cellular glycoconjugates. Cleaves off the terminal sialic acids on the glycosylated HA during virus budding to facilitate virus release. Additionally helps virus spread through the circulation by further removing sialic acids from the cell surface. These cleavages prevent self-aggregation and ensure the efficient spread of the progeny virus from cell to cell. Otherwise, infection would be limited to one round of replication. Described as a receptor-destroying enzyme because it cleaves a terminal sialic acid from the cellular receptors. May facilitate viral invasion of the upper airways by cleaving the sialic acid moieties on the mucin of the airway epithelial cells. Likely to plays a role in the budding process through its association with lipid rafts during intracellular transport. May additionally display a raft-association independent effect on budding. Plays a role in the determination of host range restriction on replication and virulence. Sialidase activity in late endosome/lysosome traffic seems to enhance virus replication. The chain is Neuraminidase from Aves.